Reading from the N-terminus, the 84-residue chain is MGKKDASSVKLPVDQYRKQIGKQDYKKTKPVLRATRLKAEAKRSAPGIRDIILVIVAVLLFLLGVYAFFYLNLSTELDLDVDMD.

The helical transmembrane segment at 51 to 71 (IILVIVAVLLFLLGVYAFFYL) threads the bilayer.

The protein belongs to the TRIQK family.

It is found in the endoplasmic reticulum membrane. Functionally, may play a role in cell growth and maintenance of cell morphology. The protein is Triple QxxK/R motif-containing protein (triqk) of Danio rerio (Zebrafish).